A 154-amino-acid polypeptide reads, in one-letter code: Ribonuclease H (154 aa).

The RNase H type-1 domain maps to 3 to 144 (ELPVVTIYTD…ADQLARDGIV (142 aa)). Mg(2+) is bound by residues D12, E50, D72, and D136.

It belongs to the RNase H family. As to quaternary structure, monomer. Mg(2+) is required as a cofactor.

The protein resides in the cytoplasm. It carries out the reaction Endonucleolytic cleavage to 5'-phosphomonoester.. Endonuclease that specifically degrades the RNA of RNA-DNA hybrids. The sequence is that of Ribonuclease H from Bradyrhizobium diazoefficiens (strain JCM 10833 / BCRC 13528 / IAM 13628 / NBRC 14792 / USDA 110).